Here is a 437-residue protein sequence, read N- to C-terminus: Transcriptional modulator WTM1 (437 aa).

Residues 103–144 (YQGETVSKMAYLDKTGETTLLSMSKNGSLAWFKEGIKVPIHI) form a WD 1 repeat. At Thr187 the chain carries Phosphothreonine. Position 200 is a phosphoserine (Ser200). WD repeat units follow at residues 221–259 (PGTT…KPIW), 264–304 (PKNG…AATT), and 326–366 (AGGD…SKYN). Residues 368–404 (DDTIAPPQDATEESQTKSLRFLHKGGSRRSPKQIGRR) are disordered. At Thr370 the chain carries Phosphothreonine. A compositionally biased stretch (basic residues) spans 387-402 (RFLHKGGSRRSPKQIG). Thr406 bears the Phosphothreonine mark.

Interacts with KAP122.

Its subcellular location is the cytoplasm. It localises to the nucleus. Functionally, transcriptional modulator with roles in meiotic regulation and silencing. Acts either as an adapter to facilitate nuclear import by KAP122 of the RNR2-RNR4 heterodimer, also called beta-beta' subunit, which corresponds to the small subunit of the ribonucleotide reductase (RNR); or as an anchor to retain RNR2-RNR4 in the nucleus. This chain is Transcriptional modulator WTM1 (WTM1), found in Saccharomyces cerevisiae (strain ATCC 204508 / S288c) (Baker's yeast).